Reading from the N-terminus, the 255-residue chain is 5'-nucleotidase SurE (255 aa).

A divalent metal cation is bound by residues Asp8, Asp9, Ser39, and Asn95.

It belongs to the SurE nucleotidase family. It depends on a divalent metal cation as a cofactor.

Its subcellular location is the cytoplasm. The enzyme catalyses a ribonucleoside 5'-phosphate + H2O = a ribonucleoside + phosphate. Nucleotidase that shows phosphatase activity on nucleoside 5'-monophosphates. The sequence is that of 5'-nucleotidase SurE from Rubrivivax gelatinosus (strain NBRC 100245 / IL144).